The sequence spans 308 residues: Ribosomal RNA large subunit methyltransferase F (308 aa).

The protein belongs to the methyltransferase superfamily. METTL16/RlmF family.

The protein localises to the cytoplasm. It catalyses the reaction adenosine(1618) in 23S rRNA + S-adenosyl-L-methionine = N(6)-methyladenosine(1618) in 23S rRNA + S-adenosyl-L-homocysteine + H(+). Functionally, specifically methylates the adenine in position 1618 of 23S rRNA. The polypeptide is Ribosomal RNA large subunit methyltransferase F (Escherichia coli O157:H7).